The sequence spans 308 residues: Aspartate carbamoyltransferase catalytic subunit (308 aa).

Residues Arg55 and Thr56 each coordinate carbamoyl phosphate. Lys83 provides a ligand contact to L-aspartate. Arg105, His133, and Gln136 together coordinate carbamoyl phosphate. L-aspartate-binding residues include Arg166 and Arg220. Residues Gly261 and Pro262 each coordinate carbamoyl phosphate.

Belongs to the aspartate/ornithine carbamoyltransferase superfamily. ATCase family. Heterododecamer (2C3:3R2) of six catalytic PyrB chains organized as two trimers (C3), and six regulatory PyrI chains organized as three dimers (R2).

The catalysed reaction is carbamoyl phosphate + L-aspartate = N-carbamoyl-L-aspartate + phosphate + H(+). Its pathway is pyrimidine metabolism; UMP biosynthesis via de novo pathway; (S)-dihydroorotate from bicarbonate: step 2/3. Functionally, catalyzes the condensation of carbamoyl phosphate and aspartate to form carbamoyl aspartate and inorganic phosphate, the committed step in the de novo pyrimidine nucleotide biosynthesis pathway. The sequence is that of Aspartate carbamoyltransferase catalytic subunit from Chlorobaculum parvum (strain DSM 263 / NCIMB 8327) (Chlorobium vibrioforme subsp. thiosulfatophilum).